A 222-amino-acid polypeptide reads, in one-letter code: Protein SHI RELATED SEQUENCE 4 (222 aa).

Residues Cys72, Cys75, Cys83, Cys88, Cys92, and Cys99 each contribute to the Zn(2+) site. Residues 72-99 constitute a DNA-binding region (zn(2)-C6 fungal-type; degenerate); sequence CQECGNQAKKGCTHGRCRTCCKSNGLHC. The interval 114 to 137 is disordered; sequence RERQQQLQTPTSNPTGGSGRVGKY. Polar residues predominate over residues 118-128; it reads QQLQTPTSNPT. The Required for homo- and heterodimerization motif lies at 191 to 194; sequence IAGH.

The protein belongs to the SHI protein family. As to expression, expressed in cotyledon tips, leaf primordia, hydathodes, stipules, and lateral root primordia and weakly at the edges of petals and sepals.

It is found in the nucleus. Its function is as follows. Transcription activator that binds DNA on 5'-ACTCTAC-3' and promotes auxin homeostasis-regulating gene expression (e.g. YUC genes), as well as genes affecting stamen development, cell expansion and timing of flowering. Synergistically with other SHI-related proteins, regulates gynoecium, stamen and leaf development in a dose-dependent manner, controlling apical-basal patterning. Promotes style and stigma formation, and influences vascular development during gynoecium development. May also have a role in the formation and/or maintenance of the shoot apical meristem (SAM). This chain is Protein SHI RELATED SEQUENCE 4 (SRS4), found in Arabidopsis thaliana (Mouse-ear cress).